The sequence spans 264 residues: Apolipoprotein A-I (264 aa).

The N-terminal stretch at 1-18 is a signal peptide; it reads MKAVVLTVAVLFLTGSQA. A run of 2 repeats spans residues 67–88 and 89–110. The segment at 67 to 264 is 10 X approximate tandem repeats; sequence LKLLDNWDSL…DEATKKLNTQ (198 aa). Methionine sulfoxide is present on Met-109. The stretch at 111-121 is one 3; half-length repeat; sequence KDLEEVKRKVQ. Tandem repeats lie at residues 122-143, 144-165, and 166-187. Residues 188–207 form a 7; truncated repeat; the sequence is PYSDELRQRLAARLEALKEG. The stretch at 208–229 is repeat 8; it reads SSFAEYQAKATEHLSALGEKAK. A 9; half-length repeat occupies 230 to 240; sequence PALEDLRQGLL. Repeat 10 spans residues 241–264; it reads PVLESLKLSFWSAVDEATKKLNTQ.

This sequence belongs to the apolipoprotein A1/A4/E family. Homodimer. Interacts with APOA1BP and CLU. Component of a sperm activating protein complex (SPAP), consisting of APOA1, an immunoglobulin heavy chain, an immunoglobulin light chain and albumin. Interacts with NDRG1. Interacts with SCGB3A2. Interacts with NAXE and YJEFN3. Post-translationally, glycosylated. Palmitoylated. In terms of processing, phosphorylation sites are present in the extracellular medium.

The protein localises to the secreted. Functionally, participates in the reverse transport of cholesterol from tissues to the liver for excretion by promoting cholesterol efflux from tissues and by acting as a cofactor for the lecithin cholesterol acyltransferase (LCAT). As part of the SPAP complex, activates spermatozoa motility. In Ictidomys tridecemlineatus (Thirteen-lined ground squirrel), this protein is Apolipoprotein A-I (APOA1).